A 93-amino-acid chain; its full sequence is Bombyxin B-11 (93 aa).

The first 22 residues, 1-22, serve as a signal peptide directing secretion; that stretch reads MMKTAVMFILVVVISLTYSSEE. 3 disulfides stabilise this stretch: C30–C75, C42–C92, and C74–C79. Residues 49–64 constitute a propeptide, bombyxin B-11 C peptide; that stretch reads GGAQYAPYWQETYLRS.

This sequence belongs to the insulin family. As to quaternary structure, heterodimer of a B chain and an A chain linked by two disulfide bonds.

Its subcellular location is the secreted. Brain peptide responsible for activation of prothoracic glands to produce ecdysone in insects. This chain is Bombyxin B-11 (BBXB11), found in Bombyx mori (Silk moth).